Consider the following 473-residue polypeptide: NADH-quinone oxidoreductase subunit N (473 aa).

Helical transmembrane passes span 3 to 23, 30 to 50, 62 to 82, 99 to 119, 120 to 140, 153 to 173, 195 to 215, 230 to 252, 262 to 282, 291 to 311, 326 to 346, 368 to 388, 408 to 428, and 444 to 464; these read LHYL…LVIA, LAFY…CSLL, FSSM…FLWL, FYLL…SEHF, ASFF…IAYS, YLIL…IVYL, MLFT…LSLV, LPTT…WKLF, IVLT…NLLA, ILAF…FLFN, ALLF…SILM, AASL…LGFM, FLVI…MVML, and VASL…PALF.

The protein belongs to the complex I subunit 2 family. In terms of assembly, NDH-1 is composed of 13 different subunits. Subunits NuoA, H, J, K, L, M, N constitute the membrane sector of the complex.

It is found in the cell inner membrane. The enzyme catalyses a quinone + NADH + 5 H(+)(in) = a quinol + NAD(+) + 4 H(+)(out). Its function is as follows. NDH-1 shuttles electrons from NADH, via FMN and iron-sulfur (Fe-S) centers, to quinones in the respiratory chain. The immediate electron acceptor for the enzyme in this species is believed to be ubiquinone. Couples the redox reaction to proton translocation (for every two electrons transferred, four hydrogen ions are translocated across the cytoplasmic membrane), and thus conserves the redox energy in a proton gradient. This chain is NADH-quinone oxidoreductase subunit N, found in Shewanella woodyi (strain ATCC 51908 / MS32).